The chain runs to 150 residues: Oleosin Ara h 10.0102 (150 aa).

2 consecutive transmembrane segments (helical) span residues 39 to 59 and 73 to 93; these read VIAV…AGLA and LFIL…LSVA.

The protein belongs to the oleosin family. In terms of tissue distribution, expressed in seeds (at protein level).

The protein resides in the lipid droplet. Its subcellular location is the membrane. In terms of biological role, may have a structural role to stabilize the lipid body during desiccation of the seed by preventing coalescence of the oil. Probably interacts with both lipid and phospholipid moieties of lipid bodies. May also provide recognition signals for specific lipase anchorage in lipolysis during seedling growth. The sequence is that of Oleosin Ara h 10.0102 from Arachis hypogaea (Peanut).